Here is a 989-residue protein sequence, read N- to C-terminus: DNA-binding protein SMUBP-2 (989 aa).

N-acetylalanine is present on Ala2. Residues Gly213–Thr220, Gln402, Tyr441, and Glu570 contribute to the ATP site. The tract at residues Thr637 to Lys783 is SS DNA-binding. Disordered stretches follow at residues Tyr650–Arg717, Leu765–His818, and Leu833–Pro869. Residues Glu677–Gln690 are compositionally biased toward low complexity. The 64-residue stretch at Ile721–Ser784 folds into the R3H domain. Positions Leu765–Ala775 are enriched in basic and acidic residues. Phosphoserine is present on residues Ser797 and Ser800. Over residues Leu833 to Gln842 the composition is skewed to low complexity. The short motif at Lys860–Lys864 is the Nuclear localization signal element. The AN1-type zinc-finger motif lies at Ile885–Ala934. Positions 891, 896, 907, 910, 915, 918, 924, and 926 each coordinate Zn(2+). The segment covering Ala954–Gly972 has biased composition (basic and acidic residues). The interval Ala954 to Thr989 is disordered.

The protein belongs to the DNA2/NAM7 helicase family. In terms of assembly, homooligomer. Interacts with RUVBL1. Interacts with RUVBL2. Interacts with GTF3C1. Interacts with ABT1. Interacts with ribosomes. In terms of tissue distribution, high expression in brain and testis, moderate in heart, spleen, and kidney, and low in other tissues.

It is found in the nucleus. It localises to the cytoplasm. The protein localises to the cell projection. The protein resides in the axon. The catalysed reaction is ATP + H2O = ADP + phosphate + H(+). Functionally, 5' to 3' helicase that unwinds RNA and DNA duplexes in an ATP-dependent reaction. Specific to 5'-phosphorylated single-stranded guanine-rich sequences. May play a role in RNA metabolism, ribosome biogenesis or initiation of translation. May play a role in regulation of transcription. Interacts with tRNA-Tyr. The protein is DNA-binding protein SMUBP-2 (IGHMBP2) of Mesocricetus auratus (Golden hamster).